The following is a 280-amino-acid chain: 4-diphosphocytidyl-2-C-methyl-D-erythritol kinase (280 aa).

Residue Lys8 is part of the active site. 91 to 101 is an ATP binding site; that stretch reads PVAAGLAGGST. Asp133 is a catalytic residue.

It belongs to the GHMP kinase family. IspE subfamily.

The enzyme catalyses 4-CDP-2-C-methyl-D-erythritol + ATP = 4-CDP-2-C-methyl-D-erythritol 2-phosphate + ADP + H(+). It functions in the pathway isoprenoid biosynthesis; isopentenyl diphosphate biosynthesis via DXP pathway; isopentenyl diphosphate from 1-deoxy-D-xylulose 5-phosphate: step 3/6. Catalyzes the phosphorylation of the position 2 hydroxy group of 4-diphosphocytidyl-2C-methyl-D-erythritol. This is 4-diphosphocytidyl-2-C-methyl-D-erythritol kinase from Clostridium botulinum (strain Okra / Type B1).